The primary structure comprises 621 residues: 1-deoxy-D-xylulose-5-phosphate synthase (621 aa).

Residues His-80 and 121-123 (GHS) contribute to the thiamine diphosphate site. A Mg(2+)-binding site is contributed by Asp-152. Residues 153 to 154 (GA), Asn-181, Tyr-288, and Glu-370 contribute to the thiamine diphosphate site. Asn-181 contacts Mg(2+).

The protein belongs to the transketolase family. DXPS subfamily. As to quaternary structure, homodimer. The cofactor is Mg(2+). Thiamine diphosphate is required as a cofactor.

It catalyses the reaction D-glyceraldehyde 3-phosphate + pyruvate + H(+) = 1-deoxy-D-xylulose 5-phosphate + CO2. The protein operates within metabolic intermediate biosynthesis; 1-deoxy-D-xylulose 5-phosphate biosynthesis; 1-deoxy-D-xylulose 5-phosphate from D-glyceraldehyde 3-phosphate and pyruvate: step 1/1. In terms of biological role, catalyzes the acyloin condensation reaction between C atoms 2 and 3 of pyruvate and glyceraldehyde 3-phosphate to yield 1-deoxy-D-xylulose-5-phosphate (DXP). The protein is 1-deoxy-D-xylulose-5-phosphate synthase of Serratia proteamaculans (strain 568).